Consider the following 458-residue polypeptide: Paired box protein Pax-8 (458 aa).

Residues G18–K144 constitute a DNA-binding region (paired). Residues G21–T77 are PAI subdomain. The segment at K96–K144 is RED subdomain. The interval P198–S217 is disordered.

The protein localises to the nucleus. Probable transcription factor. Involved in kidney development, acting synergistically with lhx1/lim-1 to establish the pronephric primordium in late gastrulae/early neurulae. The polypeptide is Paired box protein Pax-8 (Xenopus tropicalis (Western clawed frog)).